The primary structure comprises 185 residues: UPF0301 protein MS0260 (185 aa).

It belongs to the UPF0301 (AlgH) family.

The protein is UPF0301 protein MS0260 of Mannheimia succiniciproducens (strain KCTC 0769BP / MBEL55E).